We begin with the raw amino-acid sequence, 355 residues long: Peptide chain release factor 1 (355 aa).

Residue Gln234 is modified to N5-methylglutamine.

This sequence belongs to the prokaryotic/mitochondrial release factor family. Post-translationally, methylated by PrmC. Methylation increases the termination efficiency of RF1.

The protein localises to the cytoplasm. Functionally, peptide chain release factor 1 directs the termination of translation in response to the peptide chain termination codons UAG and UAA. The polypeptide is Peptide chain release factor 1 (Metamycoplasma arthritidis (strain 158L3-1) (Mycoplasma arthritidis)).